Consider the following 975-residue polypeptide: MEELCKQPPPPPPLPPPPSSPSVAIEDPLPNGKGGGAVVVPSIAKLPEEELLGSVTMHNCPGTRASARVIQKMKQDQTRPMTPPPSEREPNKKEEKAAQKTPSQLKTGSGKTTWTNVERNCFFDALNEFGKDFEAVANCINAKLKRRNANSDYSFKTKDQVRQHYYQTYHKICKYVRFSEELKKPAQELYTLINYGEMRRKLQFLTEKHFMKLKQLVYQGQITVRCKGKNIRIKTPSCKALRRLNQLDDSLEDIRLPSKVEVLVTPANMEAFGRVQSLAQNPRGRIIVPLHKKLISFIKTFEYKWRSANQRLHEEKSAIFPSSLPSTATNNNNNNNETEPMQPSVASLDPSMCFQPRPGVAIHRPLLSITAYLSSISICLTAYEERMGFKVRSETLGNLAGMPVAASKRLRTESGSEKRSPETKKPKPSASPPLEKTLDDGPLEGNLMKMENSSGDELAEEIHEFLGDILEAMPHPQAVTIPALSTTTGDTTTVAVALETSHDPVLQAYPASADLSHAMVTSVIQTTCAAAPAPSTLVSGSLTAPSVARSKRKEAKEAAAAAQARNFKPLLSDDILKRIRKGWTQANAADITIGDLYVVFGQDSKLELEYYWCEVDSSTAMASSILTINTVAPSSSSVATQTGTSASNAIQTSASSNCYVSATSTSSTSLPYNPNDCDSVERVRAVTTSSVSNKLKHLLLVANLSERVRKRQCNCGHTCDRKRDLMTKAQQLAEATATGVVDGNFRTPMLPVRRPISNIDPVRQLSALTRQKINRQVLVQRRLLPPTSVGDRPYDLLSVRQLHSGLFEPIDRVDGTSSGGISSSGSKPDSSMGATAASQDQEPGDQRALDFLNDEATQASNRDMPNLDICVATSRTDVSGSLNEAVQDESTNQSFFHGSMSPMHLLRDSTSNARWLEDNINDFSLTSLLGHLDEIDATRDILDPSSSMSIISESSVDFRHKFQEIAALLQQQEKD.

Disordered regions lie at residues 1–37 (MEEL…GGGA), 71–111 (QKMK…GSGK), 318–346 (AIFP…PSVA), 403–450 (PVAA…LMKM), and 809–844 (PIDR…QEPG). The span at 7 to 20 (QPPPPPPLPPPPSS) shows a compositional bias: pro residues. Basic and acidic residues predominate over residues 86–98 (SEREPNKKEEKAA). Over residues 100 to 111 (KTPSQLKTGSGK) the composition is skewed to polar residues. The SANT domain maps to 109 to 173 (SGKTTWTNVE…HYYQTYHKIC (65 aa)). Positions 410 to 425 (LRTESGSEKRSPETKK) are enriched in basic and acidic residues. Residues 815 to 833 (GTSSGGISSSGSKPDSSMG) show a composition bias toward low complexity.

Belongs to the cramped family.

The protein resides in the nucleus. In terms of biological role, polycomb group (Pc-G) genes are needed to maintain expression patterns of the homeotic selector genes of the Antennapedia (Antp-C) and Bithorax (Bx-C) complexes, and hence for the maintenance of segmental determination. Can act as a modifier of position effect variegation (PEV). The chain is Protein cramped (crm) from Drosophila sechellia (Fruit fly).